We begin with the raw amino-acid sequence, 157 residues long: Ribosome maturation factor RimP (157 aa).

The protein belongs to the RimP family.

Its subcellular location is the cytoplasm. Its function is as follows. Required for maturation of 30S ribosomal subunits. The protein is Ribosome maturation factor RimP of Levilactobacillus brevis (strain ATCC 367 / BCRC 12310 / CIP 105137 / JCM 1170 / LMG 11437 / NCIMB 947 / NCTC 947) (Lactobacillus brevis).